The chain runs to 184 residues: dCTP deaminase (184 aa).

107–112 (KSTYAR) is a binding site for dCTP. Glu133 acts as the Proton donor/acceptor in catalysis. Residues Gln152, Tyr166, and Gln176 each coordinate dCTP.

The protein belongs to the dCTP deaminase family. In terms of assembly, homotrimer.

The catalysed reaction is dCTP + H2O + H(+) = dUTP + NH4(+). The protein operates within pyrimidine metabolism; dUMP biosynthesis; dUMP from dCTP (dUTP route): step 1/2. Functionally, catalyzes the deamination of dCTP to dUTP. This Granulibacter bethesdensis (strain ATCC BAA-1260 / CGDNIH1) protein is dCTP deaminase.